A 251-amino-acid chain; its full sequence is Protein FAM216A (251 aa).

The interval 1–41 (MPSRWPGVAGPPALARTEGGEGSAGHSYPQNSKGTGEQHKA) is disordered.

It belongs to the FAM216 family.

In Mus musculus (Mouse), this protein is Protein FAM216A (Fam216a).